The chain runs to 336 residues: MSLQLGVIGTGAIGQDHIRRCSQTLQGCRVVAVTDIDPQQAARVLAGLTLEAEVYPDGHALIQAPEVQALLVTSWGPSHEEFVLAAIAAGKPVFCEKPLAVTAAGCRRIVEAEIAQGRRLVQVGFMRPYDAGYQALKAVVDSGRIGEPLMLHCAHRNPRVGENYKTDMAITDTLIHELDVLRWLLADDYVSVQVLFPRKTGKAHAQLRDPQIVLLETARGTRIDVEIFVNCQYGYDIQCEVVGESGIARLPEPPQVQLRSAASLSSAILMDWKERFIAAYDVELQAFVDGVRAGRVGGPSAWDGLAAAVAADACIEAQQSGAIVPISLPQRPALYA.

This sequence belongs to the Gfo/Idh/MocA family. As to quaternary structure, homotetramer.

The catalysed reaction is myo-inositol + NAD(+) = scyllo-inosose + NADH + H(+). Its function is as follows. Involved in the oxidation of myo-inositol (MI) to 2-keto-myo-inositol (2KMI or 2-inosose). The polypeptide is Inositol 2-dehydrogenase (Pseudomonas fluorescens (strain ATCC BAA-477 / NRRL B-23932 / Pf-5)).